A 359-amino-acid polypeptide reads, in one-letter code: Type II restriction enzyme HgiDI (359 aa).

The catalysed reaction is Endonucleolytic cleavage of DNA to give specific double-stranded fragments with terminal 5'-phosphates.. In terms of biological role, a P subtype restriction enzyme that recognizes the double-stranded sequence 5'-GRCGYC-3' and cleaves after R-2. The sequence is that of Type II restriction enzyme HgiDI from Herpetosiphon aurantiacus (Herpetosiphon giganteus).